Here is a 964-residue protein sequence, read N- to C-terminus: Collagen alpha-1(I) chain (964 aa).

A disordered region spans residues 1–964; that stretch reads GGISVPGPMG…PGPPGPPGPP (964 aa). Pro18, Pro21, Pro24, Pro33, Pro36, Pro39, Pro53, Pro68, Pro74, Pro83, and Pro89 each carry 4-hydroxyproline. The segment covering 56–70 has biased composition (basic and acidic residues); it reads NGDDGEAGKPGRPGE. At Lys92 the chain carries 5-hydroxylysine; alternate. O-linked (Gal...) hydroxylysine; alternate glycosylation is present at Lys92. Residue Ser98 is modified to Phosphoserine. Composition is skewed to low complexity over residues 106–117 and 126–144; these read DAGPAGPKQMGP and PGASGPAGARGNDGATGAA. 12 positions are modified to 4-hydroxyproline: Pro126, Pro147, Pro156, Pro159, Pro186, Pro189, Pro201, Pro207, Pro216, Pro222, Pro225, and Pro240. Residues 146 to 158 are compositionally biased toward pro residues; the sequence is PPGPTGPAGPPGF. The segment covering 192-231 has biased composition (low complexity); sequence AGAAGPAGNPGADGQPGAKGANGAPGIAGAPGFPGARGPS. The residue at position 243 (Lys243) is a 5-hydroxylysine. Residues Pro249, Pro252, Pro260, Pro269, Pro284, Pro290, Pro299, and Pro305 each carry the 4-hydroxyproline modification. Residues 294 to 303 show a composition bias toward gly residues; sequence GERGGPGSRG. The residue at position 314 (Lys314) is a 5-hydroxylysine. A 4-hydroxyproline mark is found at Pro323, Pro332, Pro338, Pro344, Pro353, Pro356, Pro365, Pro374, Pro379, Pro391, Pro400, Pro409, Pro412, Pro430, Pro447, Pro453, Pro459, Pro465, Pro471, Pro477, Pro489, Pro498, Pro510, and Pro519. Low complexity predominate over residues 347-373; the sequence is KGLTGSPGSPGPDGKTGPPGPAGQDGR. Positions 381 to 400 are enriched in low complexity; that stretch reads ARGQAGVMGFPGPKGAAGEP. Residues 459–468 show a composition bias toward low complexity; the sequence is PGEAGKPGEQ. At Lys531 the chain carries 5-hydroxylysine. 4-hydroxyproline is present on residues Pro537, Pro552, and Pro558. The segment covering 564-578 has biased composition (low complexity); it reads SGPSGPAGPTGARGA. Phosphoserine is present on Ser567. 4-hydroxyproline occurs at positions 579, 585, 588, 597, 603, 621, 630, and 639. Over residues 591-618 the composition is skewed to low complexity; that stretch reads AGFAGPPGADGQPGAKGEPGDAGAKGDA. A compositionally biased stretch (pro residues) spans 620 to 632; the sequence is PPGPAGPTGPPGP. At Lys642 the chain carries 5-hydroxylysine. Positions 647–663 are enriched in low complexity; the sequence is SAGPPGATGFPGAAGRV. 4-hydroxyproline is present on residues Pro651 and Pro657. Pro665 bears the 3-hydroxyproline mark. 15 positions are modified to 4-hydroxyproline: Pro666, Pro675, Pro678, Pro704, Pro712, Pro721, Pro739, Pro748, Pro751, Pro757, Pro772, Pro778, Pro784, Pro792, and Pro798. The span at 709–721 shows a compositional bias: low complexity; sequence KGSPGADGPAGAP. A compositionally biased stretch (pro residues) spans 771–781; that stretch reads PPGPMGPPGLA. A 5-hydroxylysine modification is found at Lys807. The segment covering 815–830 has biased composition (pro residues); it reads PGPPGAPGAPGAPGPV. 4-hydroxyproline occurs at positions 818, 821, and 824. The span at 850-864 shows a compositional bias: low complexity; that stretch reads AGPAGARGPAGPQGP. A compositionally biased stretch (basic and acidic residues) spans 865–879; the sequence is RGDKGETGEQGDRGI. Position 868 is a 5-hydroxylysine (Lys868). At Lys880 the chain carries 5-hydroxylysine; alternate. A glycan (O-linked (Gal...) hydroxylysine; alternate) is linked at Lys880. 4-hydroxyproline is present on residues Pro895, Pro898, Pro916, and Pro931. The segment covering 898–931 has biased composition (low complexity); it reads PGEQGPSGASGPAGPRGPPGSAGSPGKDGLNGLP. Pro936 is subject to 3-hydroxyproline. Residue Pro937 is modified to 4-hydroxyproline. Positions 949-964 are enriched in pro residues; sequence VGPPGPPGPPGPPGPP. Pro951 bears the 3-hydroxyproline mark. Pro952 bears the 4-hydroxyproline mark. 3-hydroxyproline is present on Pro954. 4-hydroxyproline is present on Pro955. A 3-hydroxyproline modification is found at Pro957. 3 positions are modified to 4-hydroxyproline: Pro958, Pro961, and Pro964.

It belongs to the fibrillar collagen family. As to quaternary structure, trimers of one alpha 2(I) and two alpha 1(I) chains. Contains mostly 4-hydroxyproline. Proline residues at the third position of the tripeptide repeating unit (G-X-Y) are hydroxylated in some or all of the chains. Post-translationally, contains 3-hydroxyproline at a few sites. This modification occurs on the first proline residue in the sequence motif Gly-Pro-Hyp, where Hyp is 4-hydroxyproline. In terms of processing, lysine residues at the third position of the tripeptide repeating unit (G-X-Y) are 5-hydroxylated in some or all of the chains. O-glycosylated on hydroxylated lysine residues. The O-linked glycan consists of a Glc-Gal disaccharide. As to expression, expressed in bones.

The protein resides in the secreted. The protein localises to the extracellular space. Its subcellular location is the extracellular matrix. Functionally, type I collagen is a member of group I collagen (fibrillar forming collagen). The polypeptide is Collagen alpha-1(I) chain (Parocnus serus (Greater Haitian ground sloth)).